Here is a 351-residue protein sequence, read N- to C-terminus: Methylthioribose-1-phosphate isomerase (351 aa).

Residues 51 to 53 (RGA), R94, and Q199 contribute to the substrate site. Residue D240 is the Proton donor of the active site. 250–251 (NK) lines the substrate pocket.

It belongs to the EIF-2B alpha/beta/delta subunits family. MtnA subfamily. Homodimer.

The enzyme catalyses 5-(methylsulfanyl)-alpha-D-ribose 1-phosphate = 5-(methylsulfanyl)-D-ribulose 1-phosphate. The protein operates within amino-acid biosynthesis; L-methionine biosynthesis via salvage pathway; L-methionine from S-methyl-5-thio-alpha-D-ribose 1-phosphate: step 1/6. Functionally, catalyzes the interconversion of methylthioribose-1-phosphate (MTR-1-P) into methylthioribulose-1-phosphate (MTRu-1-P). This chain is Methylthioribose-1-phosphate isomerase, found in Bacillus thuringiensis subsp. konkukian (strain 97-27).